The chain runs to 90 residues: Small regulatory polypeptide of amino acid response (90 aa).

The Lumenal portion of the chain corresponds to 1-18 (MGAKAPRGPKVAQWAMET). A helical transmembrane segment spans residues 19-39 (AVIGVVVVLFVVTVAITCVLC). At 40–90 (CFSCDSRAQDPQGGPGRSFTVATFRQEASLFTGPVRHAQPVPSAQDFWTFM) the chain is on the cytoplasmic side.

As to quaternary structure, interacts with components of the lysosomal V-ATPase complex. Interacts with ATP6V0A1. Interacts with ATP6V0A2. As to expression, highly expressed in lung, heart and skeletal muscle.

The protein localises to the late endosome membrane. It is found in the lysosome membrane. Functionally, negative regulator of amino acid sensing and mTORC1, a signaling complex promoting cell growth in response to growth factors, energy levels and amino acids. Negatively regulates mTORC1 activation by inhibiting recruitment of mTORC1 to lysosomes upon stimulation with amino acids: acts by promoting the formation of a tightly bound supercomplex composed of the lysosomal V-ATPase, Ragulator and Rag GTPases, preventing recruitment of mTORC1. Acts as a regulator of muscle regeneration following injury by regulating mTORC1 activation. This Homo sapiens (Human) protein is Small regulatory polypeptide of amino acid response.